We begin with the raw amino-acid sequence, 358 residues long: F-box/kelch-repeat protein SKIP4 (358 aa).

Residues 20-67 form the F-box domain; it reads ALISGVPDDISKSCLARVPREYHMAMKCVSRRWRDFVCSDEMCDYRNE. Kelch repeat units lie at residues 78–122, 123–171, 173–219, 220–269, 271–307, and 308–355; these read LCRD…VLGK, RLFV…TLDG, IIAI…VMDG, RIYI…VLDQ, FGAK…SIGN, and SIFV…SCKS.

As to quaternary structure, part of a SCF (SKP1-cullin-F-box) protein ligase complex. Interacts with SKP1A/ASK1.

Its pathway is protein modification; protein ubiquitination. The chain is F-box/kelch-repeat protein SKIP4 (SKIP4) from Arabidopsis thaliana (Mouse-ear cress).